The following is a 199-amino-acid chain: UPF0316 protein LA_0606 (199 aa).

Transmembrane regions (helical) follow at residues 47 to 67 (IAAS…TQVI) and 73 to 93 (VFCY…GMIL).

This sequence belongs to the UPF0316 family.

The protein resides in the cell membrane. The polypeptide is UPF0316 protein LA_0606 (Leptospira interrogans serogroup Icterohaemorrhagiae serovar Lai (strain 56601)).